Here is an 85-residue protein sequence, read N- to C-terminus: Anti-neuroexcitation peptide 2 (85 aa).

Positions 1 to 21 (MKLSLLLVISASMLIDGLVNA) are cleaved as a signal peptide. Residues 22–82 (DGYIRGSNGC…TWKSESNTCG (61 aa)) enclose the LCN-type CS-alpha/beta domain. Disulfide bonds link cysteine 31/cysteine 81, cysteine 35/cysteine 56, cysteine 42/cysteine 63, and cysteine 46/cysteine 65.

The protein belongs to the long (4 C-C) scorpion toxin superfamily. Sodium channel inhibitor family. Beta subfamily. As to expression, expressed by the venom gland.

It localises to the secreted. Binds to sodium channels (Nav) and inhibits them. Recombinant ANEP delays the convulsion seizure of insect models by 18% and shows anti-neuroexcitatory activity. This is Anti-neuroexcitation peptide 2 from Olivierus martensii (Manchurian scorpion).